A 463-amino-acid polypeptide reads, in one-letter code: Glycine--tRNA ligase (463 aa).

Residue arginine 102 coordinates substrate. Positions 113-134 (KHGHPPPNGLADIRDPDTGEPG) are disordered. A substrate-binding site is contributed by glutamate 165. Residues 197–199 (RNE), 207–212 (FRTREF), 284–285 (EL), and 328–331 (GLTR) contribute to the ATP site. 212 to 216 (FEQME) is a binding site for substrate. 324 to 328 (EPAAG) contributes to the substrate binding site.

It belongs to the class-II aminoacyl-tRNA synthetase family. Homodimer.

The protein resides in the cytoplasm. The catalysed reaction is tRNA(Gly) + glycine + ATP = glycyl-tRNA(Gly) + AMP + diphosphate. Catalyzes the attachment of glycine to tRNA(Gly). The protein is Glycine--tRNA ligase of Mycolicibacterium paratuberculosis (strain ATCC BAA-968 / K-10) (Mycobacterium paratuberculosis).